Consider the following 527-residue polypeptide: Protein disulfide-isomerase A2 (527 aa).

Residues 1–20 (MDKQLLPVLLLLLGVSGSWG) form the signal peptide. Positions 20–41 (GQGEEPGGPSEVLPEEPTGEEV) are disordered. The 127-residue stretch at 29 to 155 (SEVLPEEPTG…IAEWLRRRVG (127 aa)) folds into the Thioredoxin 1 domain. Residues cysteine 74 and cysteine 77 each act as nucleophile in the active site. An intrachain disulfide couples cysteine 74 to cysteine 77. N-linked (GlcNAc...) asparagine glycans are attached at residues asparagine 130 and asparagine 287. Positions 355–499 (VIAITAASVA…FSKFLDSGGH (145 aa)) constitute a Thioredoxin 2 domain. Catalysis depends on nucleophile residues cysteine 421 and cysteine 424. Cysteine 421 and cysteine 424 form a disulfide bridge. The tract at residues 495-527 (DSGGHLPKEEPKEPAASAPEAQANSTLGPKEEL) is disordered. The N-linked (GlcNAc...) asparagine glycan is linked to asparagine 518. A Prevents secretion from ER motif is present at residues 524-527 (KEEL).

The protein belongs to the protein disulfide isomerase family. In terms of assembly, part of a large chaperone multiprotein complex comprising DNAJB11, HSP90B1, HSPA5, HYOU, PDIA2, PDIA4, PDIA6, PPIB, SDF2L1, UGGT1 and very small amounts of ERP29, but not, or at very low levels, CALR nor CANX. Glycosylated. In terms of tissue distribution, highly expressed in pancreas.

The protein resides in the endoplasmic reticulum lumen. It carries out the reaction Catalyzes the rearrangement of -S-S- bonds in proteins.. In terms of biological role, acts as an intracellular estrogen-binding protein. May be involved in modulating cellular levels and biological functions of estrogens in the pancreas. May act as a chaperone that inhibits aggregation of misfolded proteins. This Mus musculus (Mouse) protein is Protein disulfide-isomerase A2.